A 513-amino-acid polypeptide reads, in one-letter code: GMP synthase [glutamine-hydrolyzing] (513 aa).

A Glutamine amidotransferase type-1 domain is found at 8–198 (MILVLDFGSQ…VFGVCECVGE (191 aa)). The active-site Nucleophile is the Cys-85. Residues His-172 and Glu-174 contribute to the active site. The GMPS ATP-PPase domain occupies 199-388 (WSMENFIEIE…LGIPDEIVWR (190 aa)). 226–232 (SGGVDSS) contributes to the ATP binding site.

In terms of assembly, homodimer.

It carries out the reaction XMP + L-glutamine + ATP + H2O = GMP + L-glutamate + AMP + diphosphate + 2 H(+). It functions in the pathway purine metabolism; GMP biosynthesis; GMP from XMP (L-Gln route): step 1/1. In terms of biological role, catalyzes the synthesis of GMP from XMP. The protein is GMP synthase [glutamine-hydrolyzing] of Bacillus licheniformis (strain ATCC 14580 / DSM 13 / JCM 2505 / CCUG 7422 / NBRC 12200 / NCIMB 9375 / NCTC 10341 / NRRL NRS-1264 / Gibson 46).